We begin with the raw amino-acid sequence, 181 residues long: Protein GrpE (181 aa).

The segment covering methionine 1–threonine 20 has biased composition (polar residues). Positions methionine 1–glutamate 39 are disordered. The segment covering glutamine 21 to glutamate 39 has biased composition (low complexity).

The protein belongs to the GrpE family. Homodimer.

Its subcellular location is the cytoplasm. In terms of biological role, participates actively in the response to hyperosmotic and heat shock by preventing the aggregation of stress-denatured proteins, in association with DnaK and GrpE. It is the nucleotide exchange factor for DnaK and may function as a thermosensor. Unfolded proteins bind initially to DnaJ; upon interaction with the DnaJ-bound protein, DnaK hydrolyzes its bound ATP, resulting in the formation of a stable complex. GrpE releases ADP from DnaK; ATP binding to DnaK triggers the release of the substrate protein, thus completing the reaction cycle. Several rounds of ATP-dependent interactions between DnaJ, DnaK and GrpE are required for fully efficient folding. The polypeptide is Protein GrpE (Burkholderia multivorans (strain ATCC 17616 / 249)).